The chain runs to 275 residues: NADPH-dependent 7-cyano-7-deazaguanine reductase (275 aa).

Position 81 to 83 (81 to 83 (VES)) interacts with substrate. An NADPH-binding site is contributed by 83–84 (SK). The active-site Thioimide intermediate is the C182. D189 (proton donor) is an active-site residue. 221–222 (HE) provides a ligand contact to substrate. An NADPH-binding site is contributed by 250 to 251 (RG).

Belongs to the GTP cyclohydrolase I family. QueF type 2 subfamily. In terms of assembly, homodimer.

Its subcellular location is the cytoplasm. It carries out the reaction 7-aminomethyl-7-carbaguanine + 2 NADP(+) = 7-cyano-7-deazaguanine + 2 NADPH + 3 H(+). The protein operates within tRNA modification; tRNA-queuosine biosynthesis. In terms of biological role, catalyzes the NADPH-dependent reduction of 7-cyano-7-deazaguanine (preQ0) to 7-aminomethyl-7-deazaguanine (preQ1). This chain is NADPH-dependent 7-cyano-7-deazaguanine reductase, found in Polaromonas sp. (strain JS666 / ATCC BAA-500).